Consider the following 203-residue polypeptide: TATA-box-binding protein (203 aa).

2 repeat units span residues 25–101 (IENI…LKAF) and 116–192 (IQNI…ARKL).

Belongs to the TBP family.

In terms of biological role, general factor that plays a role in the activation of archaeal genes transcribed by RNA polymerase. Binds specifically to the TATA box promoter element which lies close to the position of transcription initiation. The chain is TATA-box-binding protein (tbp) from Aeropyrum pernix (strain ATCC 700893 / DSM 11879 / JCM 9820 / NBRC 100138 / K1).